Here is a 167-residue protein sequence, read N- to C-terminus: Thioredoxin Y2, chloroplastic (167 aa).

Residues 1-58 (MAISLATAYISPCFTPESSNSASPSRTLSSVRLPSQIRRFGSVQSPSSSTRFAPLTVR) constitute a chloroplast transit peptide. In terms of domain architecture, Thioredoxin spans 59 to 164 (AAKKQTFNSF…LVERIENSLQ (106 aa)). Active-site nucleophile residues include Cys88 and Cys91. An intrachain disulfide couples Cys88 to Cys91.

This sequence belongs to the thioredoxin family. Plant Y-type subfamily. In terms of tissue distribution, expressed in leaves.

It is found in the plastid. The protein localises to the chloroplast stroma. In terms of biological role, thiol-disulfide oxidoreductase that poorly activates chloroplastic malate dehydrogenase (NADP-MDH) and fructose-1,6-bisphosphatase. Provides reducing equivalents for peroxiredoxin Q. In Arabidopsis thaliana (Mouse-ear cress), this protein is Thioredoxin Y2, chloroplastic.